The chain runs to 252 residues: Hydroxyacylglutathione hydrolase (252 aa).

Residues histidine 54, histidine 56, aspartate 58, histidine 59, histidine 111, aspartate 130, and histidine 170 each coordinate Zn(2+).

It belongs to the metallo-beta-lactamase superfamily. Glyoxalase II family. In terms of assembly, monomer. Requires Zn(2+) as cofactor.

It carries out the reaction an S-(2-hydroxyacyl)glutathione + H2O = a 2-hydroxy carboxylate + glutathione + H(+). The protein operates within secondary metabolite metabolism; methylglyoxal degradation; (R)-lactate from methylglyoxal: step 2/2. In terms of biological role, thiolesterase that catalyzes the hydrolysis of S-D-lactoyl-glutathione to form glutathione and D-lactic acid. This is Hydroxyacylglutathione hydrolase from Francisella tularensis subsp. novicida (strain U112).